The primary structure comprises 140 residues: Small ribosomal subunit protein uS12 (140 aa).

Asp-102 carries the post-translational modification 3-methylthioaspartic acid.

Belongs to the universal ribosomal protein uS12 family. As to quaternary structure, part of the 30S ribosomal subunit. Contacts proteins S8 and S17. May interact with IF1 in the 30S initiation complex.

Functionally, with S4 and S5 plays an important role in translational accuracy. Interacts with and stabilizes bases of the 16S rRNA that are involved in tRNA selection in the A site and with the mRNA backbone. Located at the interface of the 30S and 50S subunits, it traverses the body of the 30S subunit contacting proteins on the other side and probably holding the rRNA structure together. The combined cluster of proteins S8, S12 and S17 appears to hold together the shoulder and platform of the 30S subunit. In Geobacillus sp. (strain WCH70), this protein is Small ribosomal subunit protein uS12.